We begin with the raw amino-acid sequence, 541 residues long: MAKEVRFSEDARTRMQAGIDKLADAVKTTIGPKGRNVVLEQSYGTPTITNDGVTIAKAVELDDHYENMGAKLVTEAASKTNDVAGDGTTTATVLTQAIVNEGLKNVTAGANPVGIRSGIEKATAAAVAGLNKNSHEVEDSSSIQQIASISAANEEIGKLIADAMEKVGHDGVITIEESKGIETELDVVEGMQFDRGYMSQYFVTDNDKMETNLDNPYLLITDQKIGNIQDILPVLQSVVEQGRSLLIIADDITGEALPTLVLNKLRGTFNVAAVKAPGFGDRRKAQLQDIAILTGATVVTEDLGLQLKDVTIDQLGQANRVTITKDKTTIVEGKGDKTALADRIKSIRQEIDSTTSDFDREKLQERLAKLAGGVAVVRVGAATETELKEKKYRIEDALNATRAAVEEGFVAGGGTAFVNIIPEVKKVADSLQGDVATGARIVLRALEEPLRQIVENAGLEGSVIAQRAKSEKPEVGFNAATGEWVNMIDAGIVDPTKVTRSALQNAASVSAMILTTEAVVAELPKKDAPAAPNAGGMPGMM.

Residues 29–32 (TIGP), 86–90 (DGTTT), G413, 478–480 (NAA), and D494 each bind ATP.

It belongs to the chaperonin (HSP60) family. Forms a cylinder of 14 subunits composed of two heptameric rings stacked back-to-back. Interacts with the co-chaperonin GroES.

It localises to the cytoplasm. The enzyme catalyses ATP + H2O + a folded polypeptide = ADP + phosphate + an unfolded polypeptide.. In terms of biological role, together with its co-chaperonin GroES, plays an essential role in assisting protein folding. The GroEL-GroES system forms a nano-cage that allows encapsulation of the non-native substrate proteins and provides a physical environment optimized to promote and accelerate protein folding. This chain is Chaperonin GroEL, found in Oenococcus oeni (strain ATCC BAA-331 / PSU-1).